The following is a 185-amino-acid chain: UPF0397 protein PAM_019 (185 aa).

5 helical membrane passes run 13-33 (IGLSAAIFFVLSCFASIPVGF), 42-62 (AFLAFIAVAFGPAVGFYVGLI), 69-89 (FILFGNVSWNWVLCSALIGFI), 109-129 (IVYFWLYQVAFNFIIWGFFAP), and 143-163 (VYLQSFLIVISNILAYSVVGI).

Belongs to the UPF0397 family.

Its subcellular location is the cell membrane. The polypeptide is UPF0397 protein PAM_019 (Onion yellows phytoplasma (strain OY-M)).